We begin with the raw amino-acid sequence, 239 residues long: Small ribosomal subunit protein uS2 (239 aa).

Belongs to the universal ribosomal protein uS2 family.

The sequence is that of Small ribosomal subunit protein uS2 from Synechococcus sp. (strain CC9902).